Here is a 268-residue protein sequence, read N- to C-terminus: Ubiquinone biosynthesis protein COQ4 homolog, mitochondrial (268 aa).

Residues histidine 171, aspartate 172, histidine 175, and glutamate 187 each contribute to the Zn(2+) site.

It belongs to the COQ4 family. In terms of assembly, component of a multi-subunit COQ enzyme complex. Zn(2+) is required as a cofactor.

It is found in the mitochondrion inner membrane. It catalyses the reaction a 4-hydroxy-3-methoxy-5-(all-trans-polyprenyl)benzoate + H(+) = a 2-methoxy-6-(all-trans-polyprenyl)phenol + CO2. It functions in the pathway cofactor biosynthesis; ubiquinone biosynthesis. Functionally, lyase that catalyzes the C1-decarboxylation of 4-hydroxy-3-methoxy-5-(all-trans-polyprenyl)benzoic acid into 2-methoxy-6-(all-trans-polyprenyl)phenol during ubiquinone biosynthesis. The chain is Ubiquinone biosynthesis protein COQ4 homolog, mitochondrial from Drosophila yakuba (Fruit fly).